The primary structure comprises 327 residues: WRKY transcription factor WRKY76 (327 aa).

Positions 56 to 76 (AKILEAKVTQMSEENRRLTEV) form a coiled coil. A disordered region spans residues 88–134 (LGLDGSASPPRPVSPLSGKKRSRESMETANSCDANSNRHQGGDADHA). The Nuclear localization signal signature appears at 106-112 (KKRSRES). Positions 114-126 (ETANSCDANSNRH) are enriched in polar residues. The WRKY DNA-binding region spans 160-226 (DTSLVVKDGY…YEGEHNHPHP (67 aa)).

Belongs to the WRKY group II-a family.

It localises to the nucleus. Transcription repressor. Interacts specifically with the W box (5'-(T)TGAC[CT]-3'), a frequently occurring elicitor-responsive cis-acting element. Regulates, probably indirectly, the activation of defense-related genes during defense response. Modulates plant innate immunity against X.oryzae pv. oryzae (Xoo). This is WRKY transcription factor WRKY76 from Oryza sativa subsp. indica (Rice).